We begin with the raw amino-acid sequence, 318 residues long: NADH-ubiquinone oxidoreductase chain 1 (318 aa).

The next 8 helical transmembrane spans lie at 2–22 (FMVN…FLTL), 76–96 (TLAL…HPLI), 98–118 (FNLG…SILW), 140–160 (ISYE…SGSF), 171–191 (HSWL…STLA), 217–237 (AGSF…MNAL), 253–273 (ELYT…FLWI), and 294–314 (LPLT…TSGI).

It belongs to the complex I subunit 1 family. In terms of assembly, core subunit of respiratory chain NADH dehydrogenase (Complex I) which is composed of 45 different subunits.

The protein localises to the mitochondrion inner membrane. The catalysed reaction is a ubiquinone + NADH + 5 H(+)(in) = a ubiquinol + NAD(+) + 4 H(+)(out). Its function is as follows. Core subunit of the mitochondrial membrane respiratory chain NADH dehydrogenase (Complex I) which catalyzes electron transfer from NADH through the respiratory chain, using ubiquinone as an electron acceptor. Essential for the catalytic activity and assembly of complex I. The protein is NADH-ubiquinone oxidoreductase chain 1 (MT-ND1) of Ateles paniscus (Black spider monkey).